Reading from the N-terminus, the 759-residue chain is Phosphoribosylformylglycinamidine synthase subunit PurL (759 aa).

Residue His-46 is part of the active site. Residues Tyr-49 and Lys-88 each coordinate ATP. Glu-90 is a binding site for Mg(2+). Residues 91-94 (SHNH) and Arg-113 contribute to the substrate site. His-92 acts as the Proton acceptor in catalysis. Asp-114 contacts Mg(2+). Gln-237 contacts substrate. Mg(2+) is bound at residue Asp-265. 309-311 (ESQ) is a binding site for substrate. 2 residues coordinate ATP: Asp-498 and Gly-535. Asn-536 is a binding site for Mg(2+). Residue Ser-538 coordinates substrate.

Belongs to the FGAMS family. In terms of assembly, monomer. Part of the FGAM synthase complex composed of 1 PurL, 1 PurQ and 2 PurS subunits.

The protein localises to the cytoplasm. The catalysed reaction is N(2)-formyl-N(1)-(5-phospho-beta-D-ribosyl)glycinamide + L-glutamine + ATP + H2O = 2-formamido-N(1)-(5-O-phospho-beta-D-ribosyl)acetamidine + L-glutamate + ADP + phosphate + H(+). It participates in purine metabolism; IMP biosynthesis via de novo pathway; 5-amino-1-(5-phospho-D-ribosyl)imidazole from N(2)-formyl-N(1)-(5-phospho-D-ribosyl)glycinamide: step 1/2. Functionally, part of the phosphoribosylformylglycinamidine synthase complex involved in the purines biosynthetic pathway. Catalyzes the ATP-dependent conversion of formylglycinamide ribonucleotide (FGAR) and glutamine to yield formylglycinamidine ribonucleotide (FGAM) and glutamate. The FGAM synthase complex is composed of three subunits. PurQ produces an ammonia molecule by converting glutamine to glutamate. PurL transfers the ammonia molecule to FGAR to form FGAM in an ATP-dependent manner. PurS interacts with PurQ and PurL and is thought to assist in the transfer of the ammonia molecule from PurQ to PurL. This chain is Phosphoribosylformylglycinamidine synthase subunit PurL, found in Anaeromyxobacter dehalogenans (strain 2CP-C).